A 268-amino-acid chain; its full sequence is Ribonuclease P protein subunit p30 (268 aa).

An N-acetylalanine modification is found at alanine 2. Position 251 is a phosphoserine (serine 251).

The protein belongs to the eukaryotic/archaeal RNase P protein component 3 family. As to quaternary structure, component of nuclear RNase P and RNase MRP ribonucleoproteins. RNase P consists of a catalytic RNA moiety and about 10 protein subunits; POP1, POP4, POP5, POP7, RPP14, RPP21, RPP25, RPP30, RPP38 and RPP40. Within the RNase P complex, POP1, POP7 and RPP25 form the 'finger' subcomplex, POP5, RPP14, RPP40 and homodimeric RPP30 form the 'palm' subcomplex, and RPP21, POP4 and RPP38 form the 'wrist' subcomplex. All subunits of the RNase P complex interact with the catalytic RNA. Several subunits of RNase P are also part of the RNase MRP complex. RNase MRP consists of a catalytic RNA moiety and about 8 protein subunits; POP1, POP7, RPP25, RPP30, RPP38, RPP40 and possibly also POP4 and POP5.

It is found in the nucleus. It localises to the nucleolus. In terms of biological role, component of ribonuclease P, a ribonucleoprotein complex that generates mature tRNA molecules by cleaving their 5'-ends. Also a component of the MRP ribonuclease complex, which cleaves pre-rRNA sequences. The sequence is that of Ribonuclease P protein subunit p30 (RPP30) from Bos taurus (Bovine).